A 225-amino-acid polypeptide reads, in one-letter code: Glutathione S-transferase Mu 5 (225 aa).

Residues 5–92 enclose the GST N-terminal domain; the sequence is KSMVLGYWDI…YIARKHNMCG (88 aa). The residue at position 6 (serine 6) is a Phosphoserine. Glutathione is bound by residues 11–12, 50–54, 63–64, and 76–77; these read YW, WLDVK, NL, and QS. The GST C-terminal domain maps to 94 to 212; it reads TEEEKIRVDI…QSDRCFKMPI (119 aa). Residue tyrosine 120 coordinates substrate.

The protein belongs to the GST superfamily. Mu family. In terms of assembly, homodimer. The N-terminus is blocked. As to expression, expressed in testis and brain. Very low expression in liver, kidney, heart and lung.

The protein resides in the cytoplasm. The catalysed reaction is RX + glutathione = an S-substituted glutathione + a halide anion + H(+). Functionally, conjugation of reduced glutathione to a wide number of exogenous and endogenous hydrophobic electrophiles. In Rattus norvegicus (Rat), this protein is Glutathione S-transferase Mu 5 (Gstm5).